The sequence spans 438 residues: Elongation factor 1-alpha (438 aa).

The 224-residue stretch at 6 to 229 (KPHLNIVIIG…ALDTLEVPPK (224 aa)) folds into the tr-type G domain. Positions 15-22 (GHVDHGKS) are G1. 15-22 (GHVDHGKS) is a GTP binding site. S22 is a binding site for Mg(2+). Positions 71–75 (GVTIS) are G2. The segment at 92–95 (DAPG) is G3. GTP contacts are provided by residues 92–96 (DAPGH) and 154–157 (NKMD). Residues 154 to 157 (NKMD) form a G4 region. The interval 195-197 (SAW) is G5.

The protein belongs to the TRAFAC class translation factor GTPase superfamily. Classic translation factor GTPase family. EF-Tu/EF-1A subfamily.

Its subcellular location is the cytoplasm. The catalysed reaction is GTP + H2O = GDP + phosphate + H(+). Functionally, GTP hydrolase that promotes the GTP-dependent binding of aminoacyl-tRNA to the A-site of ribosomes during protein biosynthesis. The protein is Elongation factor 1-alpha of Desulfurococcus mucosus (Desulfurococcus mobilis).